We begin with the raw amino-acid sequence, 402 residues long: Advanced glycosylation end product-specific receptor (402 aa).

Positions M1–G22 are cleaved as a signal peptide. The Ig-like V-type domain maps to G23–K109. Residues G23 to A340 lie on the Extracellular side of the membrane. N25 and N80 each carry an N-linked (GlcNAc...) asparagine glycan. 2 cysteine pairs are disulfide-bonded: C38–C98 and C143–C206. 2 consecutive Ig-like C2-type domains span residues P123–N219 and P233–S315. A disordered region spans residues G295–G332. A helical transmembrane segment spans residues L341–W361. Residues R362–P402 lie on the Cytoplasmic side of the membrane. The interval Q365–P402 is disordered. Phosphoserine; by ATM is present on residues S376 and S389. Acidic residues predominate over residues S376–M394.

Constitutive homodimer; disulfide-linked. Forms homooligomers. Interacts with S100A1 and APP. Interacts with S100B, S100A12 and S100A14. Interacts with TIRAP. Interacts with HMGB1. Interacts with LGP2; this interaction plays an important role in AGER-mediated pro-inflammatory responses and cytokine release. Interacts with double-strand break repair protein MRE11 which is a core component of the MRN complex; the interaction enhances MRE11 endonuclease activity and promotes DNA repair. Interacts with the MCM2-7 complex via interaction with complex member MCM2; the interaction is increased following DNA replication stress and stabilizes the MCM2-7 complex at replication forks. Phosphorylated on its cytoplasmic domain by PKCzeta/PRKCZ upon ligand binding. Phosphorylated by ATM following DNA damage. Post-translationally, targeted by the ubiquitin E3 ligase subunit FBXO10 to mediate its ubiquitination and degradation. Isoform 1: Expressed at higher levels in the coronary arterioles in type 2 diabetic mice (at protein level). Endothelial cells. Expressed in lung, kidney, brain and heart. Most prevalent isoform with the highest level in heart. Isoform 2: Expressed in brain, lung, kidney and small intestine with the highest level in lung. Expressed in brain, lung, kidney and small intestine with the highest level in small intestine (at protein level). Detected in neurons of the cerebrum, bronchial epithelium, endothelial cells, tubular cells of kidney and epithelial cells of small intestine (at protein level). Expression is increased in the kidney of diabetic wild-type mice (at protein level), but not in the other tissues. Expressed only in kidney. Expression is increased in the kidney of diabetic mice. Isoform 3: Expressed in lung, kidney and heart. The second most prevalent isoform with the highest level in lung. Not expressed in brain. Isoform 4: Expressed at very low level in lung only. Isoform 5: Expressed at very low level in lung only. Isoform 6: Expressed at very low level in lung only. Isoform 7: Expressed at very low level in heart only. Isoform 8: Expressed at very low level in lung only. Isoform 9: Expressed at very low level in heart only. Isoform 10: Expressed in lung, brain, heart and kidney with a very high level in kidney. Isoform 11: Expressed in brain, kidney and heart. Not expressed in lung. Isoform 12: Expressed at very low level in lung and kidney. Isoform 13: Expressed at very low level in lung only.

It localises to the cell membrane. The protein localises to the cell projection. Its subcellular location is the phagocytic cup. The protein resides in the early endosome. It is found in the nucleus. It localises to the secreted. Functionally, cell surface pattern recognition receptor that senses endogenous stress signals with a broad ligand repertoire including advanced glycation end products, S100 proteins, high-mobility group box 1 protein/HMGB1, amyloid beta/APP oligomers, nucleic acids, histones, phospholipids and glycosaminoglycans. Advanced glycosylation end products are nonenzymatically glycosylated proteins which accumulate in vascular tissue in aging and at an accelerated rate in diabetes. These ligands accumulate at inflammatory sites during the pathogenesis of various diseases including diabetes, vascular complications, neurodegenerative disorders and cancers, and RAGE transduces their binding into pro-inflammatory responses. Upon ligand binding, uses TIRAP and MYD88 as adapters to transduce the signal ultimately leading to the induction of inflammatory cytokines IL6, IL8 and TNFalpha through activation of NF-kappa-B. Interaction with S100A12 on endothelium, mononuclear phagocytes, and lymphocytes triggers cellular activation, with generation of key pro-inflammatory mediators. Interaction with S100B after myocardial infarction may play a role in myocyte apoptosis by activating ERK1/2 and p53/TP53 signaling. Contributes to the translocation of amyloid-beta peptide (ABPP) across the cell membrane from the extracellular to the intracellular space in cortical neurons. ABPP-initiated RAGE signaling, especially stimulation of p38 mitogen-activated protein kinase (MAPK), has the capacity to drive a transport system delivering ABPP as a complex with RAGE to the intraneuronal space. Participates in endothelial albumin transcytosis together with HMGB1 through the RAGE/SRC/Caveolin-1 pathway, leading to endothelial hyperpermeability. Mediates the loading of HMGB1 in extracellular vesicles (EVs) that shuttle HMGB1 to hepatocytes by transferrin-mediated endocytosis and subsequently promote hepatocyte pyroptosis by activating the NLRP3 inflammasome. Binds to DNA and promotes extracellular hypomethylated DNA (CpG DNA) uptake by cells via the endosomal route to activate inflammatory responses. Mediates phagocytosis by non-professional phagocytes (NPP) and this is enhanced by binding to ligands including RNA, DNA, HMGB1 and histones. Promotes NPP-mediated phagocytosis of Saccharomyces cerevisiae spores by binding to RNA attached to the spore wall. Also promotes NPP-mediated phagocytosis of apoptotic cells. Following DNA damage, recruited to DNA double-strand break sites where it colocalizes with the MRN repair complex via interaction with double-strand break repair protein MRE11. Enhances the endonuclease activity of MRE11, promoting the end resection of damaged DNA. Promotes DNA damage repair in trophoblasts which enhances trophoblast invasion and contributes to placental development and maintenance. Protects cells from DNA replication stress by localizing to damaged replication forks where it stabilizes the MCM2-7 complex and promotes faithful progression of the replication fork. Its function is as follows. Is able to advanced glycosylation end product (AGE)-induce nuclear factor NF-kappa-B activation. In terms of biological role, down-regulates receptor for advanced glycosylation end products (RAGE)-ligand induced signaling through various MAPK pathways including ERK1/2, p38 and SAPK/JNK. Significantly affects tumor cell properties through decreasing cell migration, invasion, adhesion and proliferation, and increasing cellular apoptosis. Exhibits drastic inhibition on tumorigenesis in vitro. The chain is Advanced glycosylation end product-specific receptor (Ager) from Mus musculus (Mouse).